A 146-amino-acid polypeptide reads, in one-letter code: Large ribosomal subunit protein uL15 (146 aa).

Residues 1 to 10 show a composition bias toward basic and acidic residues; sequence MTLKLHDLRP. A disordered region spans residues 1–41; that stretch reads MTLKLHDLRPARGSKTARTRVGRGDGSKGKTAGRGTKGTRA.

The protein belongs to the universal ribosomal protein uL15 family. In terms of assembly, part of the 50S ribosomal subunit.

Functionally, binds to the 23S rRNA. This Mycobacterium bovis (strain BCG / Pasteur 1173P2) protein is Large ribosomal subunit protein uL15.